A 429-amino-acid chain; its full sequence is Histidine--tRNA ligase (429 aa).

The protein belongs to the class-II aminoacyl-tRNA synthetase family. In terms of assembly, homodimer.

Its subcellular location is the cytoplasm. The enzyme catalyses tRNA(His) + L-histidine + ATP = L-histidyl-tRNA(His) + AMP + diphosphate + H(+). This chain is Histidine--tRNA ligase, found in Streptococcus pneumoniae (strain 70585).